Here is a 249-residue protein sequence, read N- to C-terminus: SRR1-like protein (249 aa).

Positions 1–40 are disordered; that stretch reads MAAAALEPWSAVAPRRRKRAAGRRPRPGEGPRAEPEADGE. Residues 14-25 are compositionally biased toward basic residues; that stretch reads PRRRKRAAGRRP. The span at 26-40 shows a compositional bias: basic and acidic residues; it reads RPGEGPRAEPEADGE.

This sequence belongs to the SRR1 family.

It is found in the cytoplasm. Functionally, plays a role in the regulation of heme biosynthesis and in the regulation of the expression of core clock genes. This Mus musculus (Mouse) protein is SRR1-like protein (Srrd).